Here is a 390-residue protein sequence, read N- to C-terminus: Heparan sulfate glucosamine 3-O-sulfotransferase 3B1 (390 aa).

Residues 1 to 25 (MGQRLSGGRSCLDVPGRLLPQPPPP) are disordered. Residues 1-32 (MGQRLSGGRSCLDVPGRLLPQPPPPPPPVRRK) are Cytoplasmic-facing. Residues 33–53 (LALLFAMLCVWLYMFLYSCAG) form a helical; Signal-anchor for type II membrane protein membrane-spanning segment. Residues 54-390 (SCAAAPGLLL…QMTGHDFGWD (337 aa)) lie on the Lumenal side of the membrane. The disordered stretch occupies residues 74–133 (PPALATAPDGTPPRLPFRAPPATPLASGKEMAEGAASPEEQSPEVPDSPSPISSFFSGSG). A compositionally biased stretch (pro residues) spans 83 to 96 (GTPPRLPFRAPPAT). Low complexity predominate over residues 123–133 (SPISSFFSGSG). 3'-phosphoadenylyl sulfate is bound at residue 147-151 (KGGTR). Substrate is bound by residues 169 to 175 (EPHFFDR) and 200 to 203 (KTPS). 3'-phosphoadenylyl sulfate-binding residues include Arg228 and Ser236. An N-linked (GlcNAc...) asparagine glycan is attached at Asn258. 268-269 (WS) is a binding site for substrate. Asn329 carries N-linked (GlcNAc...) asparagine glycosylation. Residues Cys336 and Cys348 are joined by a disulfide bond. Position 353–357 (353–357 (KGRTH)) interacts with 3'-phosphoadenylyl sulfate.

This sequence belongs to the sulfotransferase 1 family. Ubiquitous. Most abundant in liver and placenta, followed by heart and kidney.

It localises to the golgi apparatus membrane. It catalyses the reaction alpha-D-glucosaminyl-[heparan sulfate](n) + 3'-phosphoadenylyl sulfate = 3-sulfo-alpha-D-glucosaminyl-[heparan sulfate](n) + adenosine 3',5'-bisphosphate + H(+). Functionally, sulfotransferase that utilizes 3'-phospho-5'-adenylyl sulfate (PAPS) to catalyze the transfer of a sulfo group to an N-unsubstituted glucosamine linked to a 2-O-sulfo iduronic acid unit on heparan sulfate. Catalyzes the O-sulfation of glucosamine in IdoUA2S-GlcNS and also in IdoUA2S-GlcNH2. The substrate-specific O-sulfation generates an enzyme-modified heparan sulfate which acts as a binding receptor to Herpes simplex virus-1 (HSV-1) and permits its entry. Unlike HS3ST1/3-OST-1, does not convert non-anticoagulant heparan sulfate to anticoagulant heparan sulfate. This chain is Heparan sulfate glucosamine 3-O-sulfotransferase 3B1 (HS3ST3B1), found in Homo sapiens (Human).